We begin with the raw amino-acid sequence, 318 residues long: Galactofuranose-binding protein YtfQ (318 aa).

Positions 1–21 are cleaved as a signal peptide; that stretch reads MWKRLLIVSAVSAAMSSMALA. Beta-D-galactofuranose-binding positions include 34-38, 111-112, arginine 167, asparagine 220, and aspartate 248; these read ESGWR and DR. An intrachain disulfide couples cysteine 150 to cysteine 214.

This sequence belongs to the bacterial solute-binding protein 2 family. In terms of assembly, the complex is composed of two ATP-binding proteins (YtfR), two transmembrane proteins (YtfT and YjfF) and a solute-binding protein (YtfQ).

The protein localises to the periplasm. Functionally, part of the ABC transporter complex YtfQRT-YjfF involved in galactofuranose transport. Binds to both alpha- and beta-galactofuranose. The chain is Galactofuranose-binding protein YtfQ (ytfQ) from Escherichia coli (strain K12).